The chain runs to 1353 residues: Protein timeless homolog (1353 aa).

3 disordered regions span residues 798-825, 1150-1291, and 1306-1335; these read VAED…EEEV, KPTR…LEED, and GGSI…DPFT. The span at 802–825 shows a compositional bias: acidic residues; the sequence is RAEDPDEEDPAEPYDSEQEEEEEV. Basic and acidic residues-rich tracts occupy residues 1150-1160 and 1168-1182; these read KPTRQVERHLE and ERSK…KFDD. 2 stretches are compositionally biased toward acidic residues: residues 1183–1206 and 1217–1226; these read FLND…EEEE and DSEDEEEHIE. Over residues 1227–1239 the composition is skewed to basic and acidic residues; it reads QEEAQKKLEKVAE. Acidic residues-rich tracts occupy residues 1261–1273, 1282–1291, and 1323–1332; these read DSSD…DSAE, AEDDSDLEED, and EEREDDDDED.

It belongs to the timeless family. As to quaternary structure, associates with the cohesin complex. Interacts with smc-1, smc-3, scc-1 and scc-3.

It localises to the nucleus. In terms of biological role, plays an important role in chromosome cohesion during both mitosis and meiosis. In prophase of meiosis, it is involved in the formation of the synaptonemal complex (SC) and specifically, in the diplotene and diakinesis phases of prophase, it stabilizes the association of homologous chromosomes during synapsis and sister chromatid cohesion. It regulates cohesin subunits to promote meiotic chromosome cohesion and localizes non-SMC (structural maintenance of chromosome) cohesin subunits to chromatin prior to or during pre-meiotic S phase. Implicated in influencing either the stability or loading of meiotic-specific cohesin subunit, rec8. Controls cell cycle exit and cell fusion to prevent the premature differentiation into adult cells. Specifically, regulates hypodermal seam cell identity. The polypeptide is Protein timeless homolog (Caenorhabditis elegans).